We begin with the raw amino-acid sequence, 238 residues long: Probable transcriptional regulatory protein YeeN (238 aa).

Belongs to the TACO1 family. YeeN subfamily.

Its subcellular location is the cytoplasm. The polypeptide is Probable transcriptional regulatory protein YeeN (Shigella flexneri).